Reading from the N-terminus, the 470-residue chain is Cysteine--tRNA ligase 1 (470 aa).

Cys-29 contributes to the Zn(2+) binding site. Residues 31–41 (PTVYDDAHIGN) carry the 'HIGH' region motif. Zn(2+)-binding residues include Cys-221, His-246, and Glu-250. A 'KMSKS' region motif is present at residues 279 to 283 (KMSKS). Lys-282 lines the ATP pocket.

Belongs to the class-I aminoacyl-tRNA synthetase family. In terms of assembly, monomer. It depends on Zn(2+) as a cofactor.

The protein localises to the cytoplasm. It carries out the reaction tRNA(Cys) + L-cysteine + ATP = L-cysteinyl-tRNA(Cys) + AMP + diphosphate. In Burkholderia lata (strain ATCC 17760 / DSM 23089 / LMG 22485 / NCIMB 9086 / R18194 / 383), this protein is Cysteine--tRNA ligase 1.